A 1407-amino-acid polypeptide reads, in one-letter code: MKDLLKFLKAQTKTEEFDAIKIALASPDMIRSWSFGEVKKPETINYRTFKPERDGLFCARIFGPVKDYECLCGKYKRLKHRGVICEKCGVEVTQTKVRRERMGHIELASPTAHIWFLKSLPSRIGLLLDMPLRDIERVLYFESYVVIEGGMTNLERQQILTEEQYLDALEEFGDEFDAKMGAEAIQALLKSMDLEQECEQLREELNETNSETKRKKLTKRIKLLEAFVQSGNKPEWMILTVLPVLPPDLRPLVPLDGGRFATSDLNDLYRRVINRNNRLKRLLDLAAPDIIVRNEKRMLQEAVDALLDNGRRGRAITGSNKRPLKSLADMIKGKQGRFRQNLLGKRVDYSGRSVITVGPYLRLHQCGLPKKMALELFKPFIYGKLELRGLATTIKAAKKMVEREEAVVWDILDEVIREHPVLLNRAPTLHRLGIQAFEPVLIEGKAIQLHPLVCAAYNADFDGDQMAVHVPLTLEAQLEARALMMSTNNILSPANGEPIIVPSQDVVLGLYYMTRDCVNAKGEGMVLTGPKEAERLYRSGLASLHARVKVRITEYKKDANGELVAKTSLKDTTVGRAILWMIVPKGLPYSIVNQALGKKAISKMLNTCYRILGLKPTVIFADQIMYTGFTYAARSGASVGIDDMVIPEKKHEIISEAEAEVAEIQEQFQSGLVTAGERYNKVIDIWAAANDRVSKAMMDNLQTETVINRDGQEEKQVSFNSIYMMADSGARGSAAQIRQLAGMRGLMAKPDGSIIETPITANFREGLNVLQYFISTHGARKGLADTALKTANSGYLTRRLVDVAQDLVVTEDDCGTHEGIMMTPVIEGGDVKEPLRDRVLGRVTAEDVLKPGTANILVPRNTLLHEQWCDLLEENSVDAVKVRSVVSCDTDFGVCAHCYGRDLARGHIINKGEAIGVIAAQSIGEPGTQLTMRTFHIGGAASRAAAESSIQVKNKGSIKLSNVKSVVNSSGKLVITSRNTELKLIDEFGRTKESYKVPYGAVLAKGDGEQVAGGETVANWDPHTMPVITEVSGFVRFTDMIDGQTITRQTDELTGLSSLVVLDSAERTAGGKDLRPALKIVDAQGNDVLIPGTDMPAQYFLPGKAIVQLEDGVQISSGDTLARIPQESGGTKDITGGLPRVADLFEARRPKEPAILAEISGIVSFGKETKGKRRLVITPVDGSDPYEEMIPKWRQLNVFEGERVERGDVISDGPEAPHDILRLRGVHAVTRYIVNEVQDVYRLQGVKINDKHIEVIVRQMLRKATIVNAGSSDFLEGEQVEYSRVKIANRELEANGKVGATYSRDLLGITKASLATESFISAASFQETTRVLTEAAVAGKRDELRGLKENVIVGRLIPAGTGYAYHQDRMRRRAAGEAPAAPQVTAEDASASLAELLNAGLGGSDNE.

Residues C70, C72, C85, and C88 each coordinate Zn(2+). Mg(2+) contacts are provided by D460, D462, and D464. Zn(2+)-binding residues include C814, C888, C895, and C898. At K972 the chain carries N6-acetyllysine.

Belongs to the RNA polymerase beta' chain family. As to quaternary structure, the RNAP catalytic core consists of 2 alpha, 1 beta, 1 beta' and 1 omega subunit. When a sigma factor is associated with the core the holoenzyme is formed, which can initiate transcription. It depends on Mg(2+) as a cofactor. The cofactor is Zn(2+).

The enzyme catalyses RNA(n) + a ribonucleoside 5'-triphosphate = RNA(n+1) + diphosphate. In terms of biological role, DNA-dependent RNA polymerase catalyzes the transcription of DNA into RNA using the four ribonucleoside triphosphates as substrates. This Shigella dysenteriae serotype 1 (strain Sd197) protein is DNA-directed RNA polymerase subunit beta'.